The sequence spans 398 residues: MTYGEAVADVLEFGQSEGEPIGMAPEEWRAFAARASLHAARAKAKELGADPPWDCELAKTPEGYYQIRGGIPYAIAKSLAAAPFADILWMETKTADLADARQFAEAIHAEFPDQMLAYNLSPSFNWDTTGMTDEEMRRFPEELGKMGFVFNFITYGGHQIDGVAAEEFATALRQDGMLALARLQRKMRLVESPYRTPQTLVGGPRSDAALAASSGRTATTKAMGKGSTQHQHLVQTEVPRKLLEEWLAMWSGHYQLKDKLRVQLRPQRAGSEVLELGIHGESDDKLANVIFQPIQDRRGRTILLVRDQNTFGAELRQKRLMTLIHLWLVHRFKAQAVHYVTPTDDNLYQTSKMKSHGIFTEVNQEVGEIIVAEVNHPRIAELLTPDRVALRKLITKEA.

Belongs to the isocitrate lyase/PEP mutase superfamily. Isocitrate lyase family. Mg(2+) is required as a cofactor.

It catalyses the reaction D-threo-isocitrate = glyoxylate + succinate. Together with AceAa, they could catalyze the formation of succinate and glyoxylate from isocitrate. The polypeptide is Putative isocitrate lyase subunit B (aceAb) (Mycobacterium tuberculosis (strain ATCC 25618 / H37Rv)).